Consider the following 305-residue polypeptide: Sulfate adenylyltransferase subunit 2 (305 aa).

It belongs to the PAPS reductase family. CysD subfamily. Heterodimer composed of CysD, the smaller subunit, and CysN.

The enzyme catalyses sulfate + ATP + H(+) = adenosine 5'-phosphosulfate + diphosphate. The protein operates within sulfur metabolism; hydrogen sulfide biosynthesis; sulfite from sulfate: step 1/3. Functionally, with CysN forms the ATP sulfurylase (ATPS) that catalyzes the adenylation of sulfate producing adenosine 5'-phosphosulfate (APS) and diphosphate, the first enzymatic step in sulfur assimilation pathway. APS synthesis involves the formation of a high-energy phosphoric-sulfuric acid anhydride bond driven by GTP hydrolysis by CysN coupled to ATP hydrolysis by CysD. The protein is Sulfate adenylyltransferase subunit 2 of Stutzerimonas stutzeri (strain A1501) (Pseudomonas stutzeri).